The chain runs to 80 residues: Cytochrome c oxidase subunit 7A1, mitochondrial (80 aa).

The transit peptide at 1–21 (MLAPRVSQALIRSFSSTARNR) directs the protein to the mitochondrion. Residues 22–46 (LKNRVPEKQKLFQEDNGIPVYLKGG) lie on the Mitochondrial matrix side of the membrane. The chain crosses the membrane as a helical span at residues 47–75 (VVDHILYRVTMGLCLGGTAYGVYCLAWAS). Topologically, residues 76–80 (FPRNK) are mitochondrial intermembrane.

Belongs to the cytochrome c oxidase VIIa family. Component of the complex IV (CIV, cytochrome c oxidase), a multisubunit enzyme composed of 14 subunits. The complex is composed of a catalytic core of 3 subunits MT-CO1, MT-CO2 and MT-CO3, encoded in the mitochondrial DNA, and 11 supernumerary subunits COX4I1 (or COX4I2), COX5A, COX5B, COX6A2 (or COX6A1), COX6B1 (or COX6B2), COX6C, COX7A1 (or COX7A2), COX7B, COX7C, COX8B and NDUFA4, which are encoded in the nuclear genome. The complex exists as a monomer or a dimer and forms supercomplexes (SCs) in the inner mitochondrial membrane with NADH-ubiquinone oxidoreductase (complex I, CI) and ubiquinol-cytochrome c oxidoreductase (cytochrome b-c1 complex, complex III, CIII), resulting in different assemblies (supercomplex SCI(1)III(2)IV(1) and megacomplex MCI(2)III(2)IV(2)).

Its subcellular location is the mitochondrion inner membrane. It functions in the pathway energy metabolism; oxidative phosphorylation. In terms of biological role, component of the mitochondrial respiratory complex IV (CIV, also named cytochrome c oxidase complex), the last enzyme in the mitochondrial electron transport chain which drives oxidative phosphorylation. The CIV complex is the component of the respiratory chain that catalyzes the reduction of oxygen to water. Acts as an assembly factor that specifically drives the homodimerization of CIV complexes, mediating the formation of mitochondrial respiratory supercomplexes (respirasomes) containing two CIV: supercomplxes with two molecules of CIV show improved activity. Despite being highly expressed in brown adipose tissue, not required for thermogenesis. The sequence is that of Cytochrome c oxidase subunit 7A1, mitochondrial (COX7A1) from Saimiri sciureus (Common squirrel monkey).